A 42-amino-acid polypeptide reads, in one-letter code: Iota-conotoxin-like R11.15 (42 aa).

Cystine bridges form between Cys-5–Cys-19, Cys-12–Cys-22, Cys-18–Cys-27, and Cys-21–Cys-36.

The protein belongs to the conotoxin I1 superfamily. In terms of tissue distribution, expressed by the venom duct.

The protein localises to the secreted. Its function is as follows. Iota-conotoxins bind to voltage-gated sodium channels (Nav) and act as agonists by shifting the voltage-dependence of activation to more hyperpolarized levels. Produces general excitatory symptoms. This chain is Iota-conotoxin-like R11.15, found in Conus radiatus (Rayed cone).